The primary structure comprises 577 residues: Arginine--tRNA ligase (577 aa).

The short motif at 122 to 132 (PNVAKEMHVGH) is the 'HIGH' region element.

Belongs to the class-I aminoacyl-tRNA synthetase family. As to quaternary structure, monomer.

It localises to the cytoplasm. The catalysed reaction is tRNA(Arg) + L-arginine + ATP = L-arginyl-tRNA(Arg) + AMP + diphosphate. The polypeptide is Arginine--tRNA ligase (Salmonella choleraesuis (strain SC-B67)).